The following is a 367-amino-acid chain: tRNA/tmRNA (uracil-C(5))-methyltransferase (367 aa).

Residues glutamine 190, tyrosine 218, asparagine 223, glutamate 239, and aspartate 299 each coordinate S-adenosyl-L-methionine. Cysteine 324 serves as the catalytic Nucleophile. Glutamate 358 functions as the Proton acceptor in the catalytic mechanism.

This sequence belongs to the class I-like SAM-binding methyltransferase superfamily. RNA M5U methyltransferase family. TrmA subfamily.

The enzyme catalyses uridine(54) in tRNA + S-adenosyl-L-methionine = 5-methyluridine(54) in tRNA + S-adenosyl-L-homocysteine + H(+). It carries out the reaction uridine(341) in tmRNA + S-adenosyl-L-methionine = 5-methyluridine(341) in tmRNA + S-adenosyl-L-homocysteine + H(+). In terms of biological role, dual-specificity methyltransferase that catalyzes the formation of 5-methyluridine at position 54 (m5U54) in all tRNAs, and that of position 341 (m5U341) in tmRNA (transfer-mRNA). In Musicola paradisiaca (strain Ech703) (Dickeya paradisiaca), this protein is tRNA/tmRNA (uracil-C(5))-methyltransferase.